The chain runs to 390 residues: Dual-specificity RNA methyltransferase RlmN (390 aa).

The active-site Proton acceptor is Glu-126. One can recognise a Radical SAM core domain in the interval 134-374 (TEDRGAVCLS…APVRTPRGQD (241 aa)). A disulfide bridge connects residues Cys-141 and Cys-379. Residues Cys-148, Cys-152, and Cys-155 each coordinate [4Fe-4S] cluster. Residues 205–206 (GE), Ser-237, 259–261 (SLH), and Asn-336 contribute to the S-adenosyl-L-methionine site. Cys-379 acts as the S-methylcysteine intermediate in catalysis.

It belongs to the radical SAM superfamily. RlmN family. Requires [4Fe-4S] cluster as cofactor.

The protein resides in the cytoplasm. It carries out the reaction adenosine(2503) in 23S rRNA + 2 reduced [2Fe-2S]-[ferredoxin] + 2 S-adenosyl-L-methionine = 2-methyladenosine(2503) in 23S rRNA + 5'-deoxyadenosine + L-methionine + 2 oxidized [2Fe-2S]-[ferredoxin] + S-adenosyl-L-homocysteine. It catalyses the reaction adenosine(37) in tRNA + 2 reduced [2Fe-2S]-[ferredoxin] + 2 S-adenosyl-L-methionine = 2-methyladenosine(37) in tRNA + 5'-deoxyadenosine + L-methionine + 2 oxidized [2Fe-2S]-[ferredoxin] + S-adenosyl-L-homocysteine. In terms of biological role, specifically methylates position 2 of adenine 2503 in 23S rRNA and position 2 of adenine 37 in tRNAs. m2A2503 modification seems to play a crucial role in the proofreading step occurring at the peptidyl transferase center and thus would serve to optimize ribosomal fidelity. This Acidiphilium cryptum (strain JF-5) protein is Dual-specificity RNA methyltransferase RlmN.